We begin with the raw amino-acid sequence, 283 residues long: Pyridoxal kinase PdxY (283 aa).

S8 lines the substrate pocket. ATP-binding residues include D110 and E147. D219 is a substrate binding site.

It belongs to the pyridoxine kinase family. PdxY subfamily. As to quaternary structure, homodimer. Requires Mg(2+) as cofactor.

It carries out the reaction pyridoxal + ATP = pyridoxal 5'-phosphate + ADP + H(+). It participates in cofactor metabolism; pyridoxal 5'-phosphate salvage; pyridoxal 5'-phosphate from pyridoxal: step 1/1. Its function is as follows. Pyridoxal kinase involved in the salvage pathway of pyridoxal 5'-phosphate (PLP). Catalyzes the phosphorylation of pyridoxal to PLP. The chain is Pyridoxal kinase PdxY from Leifsonia xyli subsp. xyli (strain CTCB07).